Consider the following 291-residue polypeptide: Elongation factor Ts (291 aa).

Residues 80 to 83 (TDFV) are involved in Mg(2+) ion dislocation from EF-Tu.

The protein belongs to the EF-Ts family.

It localises to the cytoplasm. Its function is as follows. Associates with the EF-Tu.GDP complex and induces the exchange of GDP to GTP. It remains bound to the aminoacyl-tRNA.EF-Tu.GTP complex up to the GTP hydrolysis stage on the ribosome. The polypeptide is Elongation factor Ts (Limosilactobacillus reuteri (strain DSM 20016) (Lactobacillus reuteri)).